A 179-amino-acid chain; its full sequence is Large ribosomal subunit protein uL6 (179 aa).

Belongs to the universal ribosomal protein uL6 family. In terms of assembly, part of the 50S ribosomal subunit.

This protein binds to the 23S rRNA, and is important in its secondary structure. It is located near the subunit interface in the base of the L7/L12 stalk, and near the tRNA binding site of the peptidyltransferase center. The sequence is that of Large ribosomal subunit protein uL6 from Bacillus anthracis.